The following is an 81-amino-acid chain: Costars family protein ABRACL (81 aa).

The protein belongs to the costars family.

In Xenopus laevis (African clawed frog), this protein is Costars family protein ABRACL (abracl).